Here is a 488-residue protein sequence, read N- to C-terminus: Cobyric acid synthase (488 aa).

One can recognise a GATase cobBQ-type domain in the interval 248–441 (VLRVVVPALP…VHGLFDAPDA (194 aa)). C328 serves as the catalytic Nucleophile. H433 is a catalytic residue.

It belongs to the CobB/CobQ family. CobQ subfamily.

It participates in cofactor biosynthesis; adenosylcobalamin biosynthesis. Its function is as follows. Catalyzes amidations at positions B, D, E, and G on adenosylcobyrinic A,C-diamide. NH(2) groups are provided by glutamine, and one molecule of ATP is hydrogenolyzed for each amidation. This Burkholderia ambifaria (strain ATCC BAA-244 / DSM 16087 / CCUG 44356 / LMG 19182 / AMMD) (Burkholderia cepacia (strain AMMD)) protein is Cobyric acid synthase.